Consider the following 59-residue polypeptide: Large ribosomal subunit protein uL30 (59 aa).

It belongs to the universal ribosomal protein uL30 family. As to quaternary structure, part of the 50S ribosomal subunit.

This is Large ribosomal subunit protein uL30 from Nocardia farcinica (strain IFM 10152).